Consider the following 394-residue polypeptide: Elongation factor Tu (394 aa).

The tr-type G domain maps to 10–205; that stretch reads KPHMNVGTIG…TMDNYFDLPQ (196 aa). Positions 19–26 are G1; it reads GHVDHGKT. Residue 19–26 participates in GTP binding; it reads GHVDHGKT. Thr-26 contacts Mg(2+). A G2 region spans residues 61-65; that stretch reads GITIN. The tract at residues 82–85 is G3; that stretch reads DCPG. GTP contacts are provided by residues 82–86 and 137–140; these read DCPGH and NKLD. A G4 region spans residues 137–140; the sequence is NKLD. The G5 stretch occupies residues 173-175; that stretch reads SAF.

Belongs to the TRAFAC class translation factor GTPase superfamily. Classic translation factor GTPase family. EF-Tu/EF-1A subfamily. In terms of assembly, monomer.

Its subcellular location is the cytoplasm. The enzyme catalyses GTP + H2O = GDP + phosphate + H(+). In terms of biological role, GTP hydrolase that promotes the GTP-dependent binding of aminoacyl-tRNA to the A-site of ribosomes during protein biosynthesis. In Borrelia turicatae (strain 91E135), this protein is Elongation factor Tu.